Here is a 527-residue protein sequence, read N- to C-terminus: Glutamate--cysteine ligase (527 aa).

The protein belongs to the glutamate--cysteine ligase type 1 family. Type 1 subfamily.

It carries out the reaction L-cysteine + L-glutamate + ATP = gamma-L-glutamyl-L-cysteine + ADP + phosphate + H(+). It functions in the pathway sulfur metabolism; glutathione biosynthesis; glutathione from L-cysteine and L-glutamate: step 1/2. The protein is Glutamate--cysteine ligase of Pseudomonas aeruginosa (strain UCBPP-PA14).